Here is a 342-residue protein sequence, read N- to C-terminus: Autoinducer 2 import system permease protein LsrC (342 aa).

Residues 1 to 13 are Periplasmic-facing; it reads MLKFIQNNREITA. Residues 14 to 34 traverse the membrane as a helical segment; sequence LLAVVLLFVLPGFLDRQYLSV. Topologically, residues 35–38 are cytoplasmic; the sequence is QTLT. Residues 39–59 traverse the membrane as a helical segment; it reads MVYSSAQILILLAMGATLVML. Over 60 to 69 the chain is Periplasmic; the sequence is TRNIDVSVGS. Residues 70 to 90 traverse the membrane as a helical segment; the sequence is ITGMCAVLLGMLLNAGYSLPV. Over 91 to 92 the chain is Cytoplasmic; the sequence is AC. A helical transmembrane segment spans residues 93-113; it reads VATLLLGLLAGFFNGALVAWL. Position 114 (Lys114) is a topological domain, periplasmic. Residues 115 to 135 form a helical membrane-spanning segment; that stretch reads IPAIVATLGTLGLYRGIMLLW. The Cytoplasmic segment spans residues 136–154; the sequence is TGGKWIEGLPAELKQLSAP. Residues 155–175 form a helical membrane-spanning segment; sequence LLLGISAIGWLTIILVAFMAW. Over 176-212 the chain is Periplasmic; the sequence is LLAKTAFGRSFYATGDNLQGARQLGVRTEAIRIVAFS. The helical transmembrane segment at 213–233 threads the bilayer; sequence LNGCMAALAGIVFASQIGFIL. Topologically, residues 234-251 are cytoplasmic; sequence NQTGTGLEMKAIAACVLG. The chain crosses the membrane as a helical span at residues 252 to 272; sequence GISLLGGSGAIIGAVLGAWFL. The Periplasmic segment spans residues 273-283; the sequence is TQIDSVLVLLR. A helical transmembrane segment spans residues 284-304; sequence IPAWWNDFIAGLVLLAVLVFD. At 305-342 the chain is on the cytoplasmic side; the sequence is GRLRCALERNLRRQKYARFMTPPPSVKPASSGKKREAA.

This sequence belongs to the binding-protein-dependent transport system permease family. AraH/RbsC subfamily. The complex is composed of two ATP-binding proteins (LsrA), two transmembrane proteins (LsrC and LsrD) and a solute-binding protein (LsrB).

The protein localises to the cell inner membrane. Part of the ABC transporter complex LsrABCD involved in autoinducer 2 (AI-2) import. Probably responsible for the translocation of the substrate across the membrane. The sequence is that of Autoinducer 2 import system permease protein LsrC (lsrC) from Shigella flexneri.